We begin with the raw amino-acid sequence, 738 residues long: Eukaryotic translation initiation factor 3 subunit B (738 aa).

A compositionally biased stretch (polar residues) spans 1-10 (MAPSFENLSE). Positions 1-20 (MAPSFENLSEQDLHEEEEEE) are disordered. In terms of domain architecture, RRM spans 40–126 (TFVVIDGLPV…HTLLVNKLMD (87 aa)). WD repeat units lie at residues 193 to 230 (AHWT…KQKQ), 232 to 289 (PHPF…RSFV), 301 to 342 (QPKK…LLGK), 454 to 494 (SLKD…SFFA), 511 to 554 (IEKK…EKND), and 569 to 607 (VDHY…HTFS). Residues 693–720 (EAYGLPEEADQPKAAKDAPTNTEDKGET) form a disordered region. The segment covering 702 to 720 (DQPKAAKDAPTNTEDKGET) has biased composition (basic and acidic residues).

This sequence belongs to the eIF-3 subunit B family. In terms of assembly, component of the eukaryotic translation initiation factor 3 (eIF-3) complex.

It is found in the cytoplasm. Its function is as follows. RNA-binding component of the eukaryotic translation initiation factor 3 (eIF-3) complex, which is involved in protein synthesis of a specialized repertoire of mRNAs and, together with other initiation factors, stimulates binding of mRNA and methionyl-tRNAi to the 40S ribosome. The eIF-3 complex specifically targets and initiates translation of a subset of mRNAs involved in cell proliferation. This chain is Eukaryotic translation initiation factor 3 subunit B (prt1), found in Emericella nidulans (strain FGSC A4 / ATCC 38163 / CBS 112.46 / NRRL 194 / M139) (Aspergillus nidulans).